Reading from the N-terminus, the 364-residue chain is D-alanine--D-alanine ligase (364 aa).

An ATP-grasp domain is found at 140-346; it reads KKLALLEGIP…YSQLIDKLIS (207 aa). 173–228 is an ATP binding site; that stretch reads ESEFSYPVFVKPANSGSSVGISKAKDREDLVLAIHEAFLYDTKILIEQAINAREIE. Mg(2+)-binding residues include Asp299, Glu313, and Asn315.

Belongs to the D-alanine--D-alanine ligase family. Mg(2+) serves as cofactor. The cofactor is Mn(2+).

The protein resides in the cytoplasm. It carries out the reaction 2 D-alanine + ATP = D-alanyl-D-alanine + ADP + phosphate + H(+). It participates in cell wall biogenesis; peptidoglycan biosynthesis. Functionally, cell wall formation. The protein is D-alanine--D-alanine ligase of Caldicellulosiruptor bescii (strain ATCC BAA-1888 / DSM 6725 / KCTC 15123 / Z-1320) (Anaerocellum thermophilum).